We begin with the raw amino-acid sequence, 484 residues long: Protein nucleotidyltransferase YdiU (484 aa).

Residues G81, G83, R84, K103, D115, G116, R166, and R173 each contribute to the ATP site. D244 serves as the catalytic Proton acceptor. Positions 245 and 254 each coordinate Mg(2+). D254 is a binding site for ATP.

The protein belongs to the SELO family. Mg(2+) serves as cofactor. Mn(2+) is required as a cofactor.

It carries out the reaction L-seryl-[protein] + ATP = 3-O-(5'-adenylyl)-L-seryl-[protein] + diphosphate. The catalysed reaction is L-threonyl-[protein] + ATP = 3-O-(5'-adenylyl)-L-threonyl-[protein] + diphosphate. It catalyses the reaction L-tyrosyl-[protein] + ATP = O-(5'-adenylyl)-L-tyrosyl-[protein] + diphosphate. The enzyme catalyses L-histidyl-[protein] + UTP = N(tele)-(5'-uridylyl)-L-histidyl-[protein] + diphosphate. It carries out the reaction L-seryl-[protein] + UTP = O-(5'-uridylyl)-L-seryl-[protein] + diphosphate. The catalysed reaction is L-tyrosyl-[protein] + UTP = O-(5'-uridylyl)-L-tyrosyl-[protein] + diphosphate. Functionally, nucleotidyltransferase involved in the post-translational modification of proteins. It can catalyze the addition of adenosine monophosphate (AMP) or uridine monophosphate (UMP) to a protein, resulting in modifications known as AMPylation and UMPylation. This is Protein nucleotidyltransferase YdiU from Shewanella putrefaciens (strain CN-32 / ATCC BAA-453).